A 294-amino-acid chain; its full sequence is Nitrogenase iron protein (294 aa).

Residue 11-18 (GKGGIGKS) participates in ATP binding. Cysteine 99 lines the [4Fe-4S] cluster pocket. Arginine 102 carries the post-translational modification ADP-ribosylarginine; by dinitrogenase reductase ADP-ribosyltransferase. Cysteine 133 provides a ligand contact to [4Fe-4S] cluster.

Belongs to the NifH/BchL/ChlL family. As to quaternary structure, homodimer. Requires [4Fe-4S] cluster as cofactor. In terms of processing, the reversible ADP-ribosylation of Arg-102 inactivates the nitrogenase reductase and regulates nitrogenase activity.

It catalyses the reaction N2 + 8 reduced [2Fe-2S]-[ferredoxin] + 16 ATP + 16 H2O = H2 + 8 oxidized [2Fe-2S]-[ferredoxin] + 2 NH4(+) + 16 ADP + 16 phosphate + 6 H(+). Functionally, the key enzymatic reactions in nitrogen fixation are catalyzed by the nitrogenase complex, which has 2 components: the iron protein and the molybdenum-iron protein. In Bradyrhizobium sp. (strain ANU 289), this protein is Nitrogenase iron protein (nifH).